We begin with the raw amino-acid sequence, 210 residues long: RNA chaperone ProQ (210 aa).

2 stretches are compositionally biased toward basic and acidic residues: residues 103-124 and 132-144; these read LKESKERVFASRRTNNKEEKAK and RKADAAAKSDKPK. Positions 103–148 are disordered; it reads LKESKERVFASRRTNNKEEKAKQPRRPAPRKADAAAKSDKPKAAPK.

The protein belongs to the ProQ family.

Its subcellular location is the cytoplasm. In terms of biological role, RNA chaperone with significant RNA binding, RNA strand exchange and RNA duplexing activities. The sequence is that of RNA chaperone ProQ from Aeromonas salmonicida (strain A449).